The following is a 414-amino-acid chain: 2,3-diketo-5-methylthiopentyl-1-phosphate enolase (414 aa).

Catalysis depends on Lys-99, which acts as the Proton acceptor. Substrate contacts are provided by residues Lys-148, 174 to 177 (KDDE), His-265, Gly-338, and 360 to 361 (GG). The Mg(2+) site is built by Lys-174, Asp-176, and Glu-177. N6-carboxylysine is present on Lys-174.

Belongs to the RuBisCO large chain family. Type IV subfamily. Homodimer. Requires Mg(2+) as cofactor.

It catalyses the reaction 5-methylsulfanyl-2,3-dioxopentyl phosphate = 2-hydroxy-5-methylsulfanyl-3-oxopent-1-enyl phosphate. It participates in amino-acid biosynthesis; L-methionine biosynthesis via salvage pathway; L-methionine from S-methyl-5-thio-alpha-D-ribose 1-phosphate: step 3/6. Functionally, catalyzes the enolization of 2,3-diketo-5-methylthiopentyl-1-phosphate (DK-MTP-1-P) into 2-hydroxy-3-keto-5-methylthiopentenyl-1-phosphate (HK-MTPenyl-1-P). In Bacillus cereus (strain Q1), this protein is 2,3-diketo-5-methylthiopentyl-1-phosphate enolase.